The following is a 184-amino-acid chain: Photosystem I assembly protein Ycf4 (184 aa).

Helical transmembrane passes span 22–42 (LCWA…GTSS) and 57–77 (ILFF…LFIS).

Belongs to the Ycf4 family.

It localises to the plastid. The protein localises to the chloroplast thylakoid membrane. Its function is as follows. Seems to be required for the assembly of the photosystem I complex. The polypeptide is Photosystem I assembly protein Ycf4 (Daucus carota (Wild carrot)).